We begin with the raw amino-acid sequence, 468 residues long: ATP synthase subunit beta (468 aa).

155 to 162 contacts ATP; sequence GGAGVGKT.

Belongs to the ATPase alpha/beta chains family. F-type ATPases have 2 components, CF(1) - the catalytic core - and CF(0) - the membrane proton channel. CF(1) has five subunits: alpha(3), beta(3), gamma(1), delta(1), epsilon(1). CF(0) has three main subunits: a(1), b(2) and c(9-12). The alpha and beta chains form an alternating ring which encloses part of the gamma chain. CF(1) is attached to CF(0) by a central stalk formed by the gamma and epsilon chains, while a peripheral stalk is formed by the delta and b chains.

It localises to the cell membrane. The enzyme catalyses ATP + H2O + 4 H(+)(in) = ADP + phosphate + 5 H(+)(out). Functionally, produces ATP from ADP in the presence of a proton gradient across the membrane. The catalytic sites are hosted primarily by the beta subunits. The sequence is that of ATP synthase subunit beta from Streptococcus pyogenes serotype M3 (strain ATCC BAA-595 / MGAS315).